The primary structure comprises 125 residues: UPF0763 protein NAMH_0545 (125 aa).

The protein belongs to the UPF0763 family.

This is UPF0763 protein NAMH_0545 from Nautilia profundicola (strain ATCC BAA-1463 / DSM 18972 / AmH).